Here is a 626-residue protein sequence, read N- to C-terminus: Basic helix-loop-helix ARNT-like protein 1 (626 aa).

Positions 1-60 are disordered; sequence MADQRMDISSTISDFMSPGPTDLLSSSLGTSGVDCNRKRKGSSTDYQESMDTDKDDPHGR. S17 bears the Phosphoserine; by GSK3-beta mark. Over residues 17 to 32 the composition is skewed to low complexity; sequence SPGPTDLLSSSLGTSG. Residue T21 is modified to Phosphothreonine; by GSK3-beta. The Nuclear localization signal motif lies at 36–41; the sequence is NRKRKG. Over residues 51–60 the composition is skewed to basic and acidic residues; it reads DTDKDDPHGR. Residues 72–125 enclose the bHLH domain; it reads NAREAHSQIEKRRRDKMNSFIDELASLVPTCNAMSRKLDKLTVLRMAVQHMKTL. S78 carries the post-translational modification Phosphoserine. Phosphoserine; by CK2 is present on S90. A Nuclear export signal 1 motif is present at residues 142–152; sequence LSDDELKHLIL. Positions 143-215 constitute a PAS 1 domain; sequence SDDELKHLIL…EQLSSSDTAP (73 aa). A Glycyl lysine isopeptide (Lys-Gly) (interchain with G-Cter in SUMO2 and SUMO3) cross-link involves residue K252. K259 participates in a covalent cross-link: Glycyl lysine isopeptide (Lys-Gly) (interchain with G-Cter in SUMO); alternate. Residue K259 forms a Glycyl lysine isopeptide (Lys-Gly) (interchain with G-Cter in SUMO2); alternate linkage. The 71-residue stretch at 326-396 folds into the PAS 2 domain; the sequence is PQPAGGDIKV…ECHRQVLQTR (71 aa). The Nuclear export signal 2 motif lies at 361 to 369; the sequence is LAYLPQELL. Residues 402-445 form the PAC domain; it reads NCYKFKIKDGSFITLRSRWFSFMNPWTKEVEYIVSTNTVVLANV. Disordered stretches follow at residues 458 to 493 and 511 to 596; these read ASPH…AGAG and GSSP…PSND. Over residues 484–493 the composition is skewed to gly residues; sequence IPGGTRAGAG. The interaction with CIART stretch occupies residues 508–588; the sequence is RIRGSSPSSC…ISIDMIDNDQ (81 aa). The segment covering 511-521 has biased composition (low complexity); it reads GSSPSSCGSSP. K538 is subject to N6-acetyllysine.

Component of the circadian clock oscillator which includes the CRY1/2 proteins, CLOCK or NPAS2, BMAL1 or BMAL2, CSNK1D and/or CSNK1E, TIMELESS and the PER1/2/3 proteins. Forms a heterodimer with CLOCK. The CLOCK-BMAL1 heterodimer is required for E-box-dependent transactivation, for CLOCK nuclear translocation and degradation, and, for phosphorylation of both CLOCK and BMAL1. Part of a nuclear complex which also includes RACK1 and PRKCA; RACK1 and PRKCA are recruited to the complex in a circadian manner. Interacts with NPAS2. Interacts with EZH2. Interacts with SUMO3. Interacts with SIRT1. Interacts with AHR. Interacts with ID1, ID2 and ID3. Interacts with DDX4. Interacts with OGT. Interacts with EED and SUZ12. Interacts with MTA1. Interacts with CIART. Interacts with HSP90. Interacts with KAT2B and EP300. Interacts with BHLHE40/DEC1 and BHLHE41/DEC2. Interacts with RELB and the interaction is enhanced in the presence of CLOCK. Interacts with PER1, PER2, CRY1 and CRY2 and this interaction requires a translocation to the nucleus. Interaction of the CLOCK-BMAL1 heterodimer with PER or CRY inhibits transcription activation. Interaction of the CLOCK-BMAL1 with CRY1 is independent of DNA but with PER2 is off DNA. The CLOCK-BMAL1 heterodimer interacts with GSK3B. Interacts with KDM5A. Interacts with KMT2A; in a circadian manner. Interacts with UBE3A. Interacts with PRKCG. Interacts with MAGEL2. Interacts with NCOA2. Interacts with THRAP3. The CLOCK-BMAL1 heterodimer interacts with PASD1. Interacts with PASD1. Interacts with USP9X. Interacts with PIWIL2 (via PIWI domain). Interacts with HDAC3. Interacts with HNF4A. Ubiquitinated, leading to its proteasomal degradation. Deubiquitinated by USP9X. In terms of processing, O-glycosylated; contains O-GlcNAc. O-glycosylation by OGT prevents protein degradation by inhibiting ubiquitination. It also stabilizes the CLOCK-BMAL1 heterodimer thereby increasing CLOCK-BMAL1-mediated transcription of genes in the negative loop of the circadian clock such as PER1/2/3 and CRY1/2. Post-translationally, acetylated on Lys-538 by CLOCK during the repression phase of the circadian cycle. Acetylation facilitates recruitment of CRY1 protein and initiates the repression phase of the circadian cycle. Acetylated at Lys-538 by KAT5 during the activation phase of the cycle, leading to recruitment of the positive transcription elongation factor b (P-TEFb) and BRD4, followed by productive elongation of circadian transcripts. Deacetylated by SIRT1, which may result in decreased protein stability. Phosphorylated upon dimerization with CLOCK. Phosphorylation enhances the transcriptional activity, alters the subcellular localization and decreases the stability of the CLOCK-BMAL1 heterodimer by promoting its degradation. Phosphorylation shows circadian variations in the liver with a peak between CT10 to CT14. Phosphorylation at Ser-90 by CK2 is essential for its nuclear localization, its interaction with CLOCK and controls CLOCK nuclear entry. Dephosphorylation at Ser-78 is important for dimerization with CLOCK and transcriptional activity. In terms of processing, sumoylated on Lys-259 upon dimerization with CLOCK. Predominantly conjugated to poly-SUMO2/3 rather than SUMO1 and the level of these conjugates undergo rhythmic variation, peaking at CT9-CT12. Sumoylation localizes it exclusively to the PML body and promotes its ubiquitination in the PML body, ubiquitin-dependent proteasomal degradation and the transcriptional activity of the CLOCK-BMAL1 heterodimer. Post-translationally, undergoes lysosome-mediated degradation in a time-dependent manner in the liver. In terms of tissue distribution, highly expressed in the suprachiasmatic nucleus (SCN). Also expressed in all other tissues examined including kidney, intestine, liver, heart, spleen, brain, muscle, lung, harderian gland and eye. Low expression in kidney and spleen.

It localises to the nucleus. The protein resides in the cytoplasm. The protein localises to the PML body. Transcriptional activator which forms a core component of the circadian clock. The circadian clock, an internal time-keeping system, regulates various physiological processes through the generation of approximately 24 hour circadian rhythms in gene expression, which are translated into rhythms in metabolism and behavior. It is derived from the Latin roots 'circa' (about) and 'diem' (day) and acts as an important regulator of a wide array of physiological functions including metabolism, sleep, body temperature, blood pressure, endocrine, immune, cardiovascular, and renal function. Consists of two major components: the central clock, residing in the suprachiasmatic nucleus (SCN) of the brain, and the peripheral clocks that are present in nearly every tissue and organ system. Both the central and peripheral clocks can be reset by environmental cues, also known as Zeitgebers (German for 'timegivers'). The predominant Zeitgeber for the central clock is light, which is sensed by retina and signals directly to the SCN. The central clock entrains the peripheral clocks through neuronal and hormonal signals, body temperature and feeding-related cues, aligning all clocks with the external light/dark cycle. Circadian rhythms allow an organism to achieve temporal homeostasis with its environment at the molecular level by regulating gene expression to create a peak of protein expression once every 24 hours to control when a particular physiological process is most active with respect to the solar day. Transcription and translation of core clock components (CLOCK, NPAS2, BMAL1, BMAL2, PER1, PER2, PER3, CRY1 and CRY2) plays a critical role in rhythm generation, whereas delays imposed by post-translational modifications (PTMs) are important for determining the period (tau) of the rhythms (tau refers to the period of a rhythm and is the length, in time, of one complete cycle). A diurnal rhythm is synchronized with the day/night cycle, while the ultradian and infradian rhythms have a period shorter and longer than 24 hours, respectively. Disruptions in the circadian rhythms contribute to the pathology of cardiovascular diseases, cancer, metabolic syndromes and aging. A transcription/translation feedback loop (TTFL) forms the core of the molecular circadian clock mechanism. Transcription factors, CLOCK or NPAS2 and BMAL1 or BMAL2, form the positive limb of the feedback loop, act in the form of a heterodimer and activate the transcription of core clock genes and clock-controlled genes (involved in key metabolic processes), harboring E-box elements (5'-CACGTG-3') within their promoters. The core clock genes: PER1/2/3 and CRY1/2 which are transcriptional repressors form the negative limb of the feedback loop and interact with the CLOCK|NPAS2-BMAL1|BMAL2 heterodimer inhibiting its activity and thereby negatively regulating their own expression. This heterodimer also activates nuclear receptors NR1D1/2 and RORA/B/G, which form a second feedback loop and which activate and repress BMAL1 transcription, respectively. BMAL1 positively regulates myogenesis and negatively regulates adipogenesis via the transcriptional control of the genes of the canonical Wnt signaling pathway. Plays a role in normal pancreatic beta-cell function; regulates glucose-stimulated insulin secretion via the regulation of antioxidant genes NFE2L2/NRF2 and its targets SESN2, PRDX3, CCLC and CCLM. Negatively regulates the mTORC1 signaling pathway; regulates the expression of MTOR and DEPTOR. Controls diurnal oscillations of Ly6C inflammatory monocytes; rhythmic recruitment of the PRC2 complex imparts diurnal variation to chemokine expression that is necessary to sustain Ly6C monocyte rhythms. Regulates the expression of HSD3B2, STAR, PTGS2, CYP11A1, CYP19A1 and LHCGR in the ovary and also the genes involved in hair growth. Plays an important role in adult hippocampal neurogenesis by regulating the timely entry of neural stem/progenitor cells (NSPCs) into the cell cycle and the number of cell divisions that take place prior to cell-cycle exit. Regulates the circadian expression of CIART and KLF11. The CLOCK-BMAL1 heterodimer regulates the circadian expression of SERPINE1/PAI1, VWF, B3, CCRN4L/NOC, NAMPT, DBP, MYOD1, PPARGC1A, PPARGC1B, SIRT1, GYS2, F7, NGFR, GNRHR, BHLHE40/DEC1, ATF4, MTA1, KLF10 and also genes implicated in glucose and lipid metabolism. Promotes rhythmic chromatin opening, regulating the DNA accessibility of other transcription factors. The NPAS2-BMAL1 heterodimer positively regulates the expression of MAOA, F7 and LDHA and modulates the circadian rhythm of daytime contrast sensitivity by regulating the rhythmic expression of adenylate cyclase type 1 (ADCY1) in the retina. The preferred binding motif for the CLOCK-BMAL1 heterodimer is 5'-CACGTGA-3', which contains a flanking adenine nucleotide at the 3-prime end of the canonical 6-nucleotide E-box sequence. CLOCK specifically binds to the half-site 5'-CAC-3', while BMAL1 binds to the half-site 5'-GTGA-3'. The CLOCK-BMAL1 heterodimer also recognizes the non-canonical E-box motifs 5'-AACGTGA-3' and 5'-CATGTGA-3'. Essential for the rhythmic interaction of CLOCK with ASS1 and plays a critical role in positively regulating CLOCK-mediated acetylation of ASS1. Plays a role in protecting against lethal sepsis by limiting the expression of immune checkpoint protein CD274 in macrophages in a PKM2-dependent manner. Regulates the diurnal rhythms of skeletal muscle metabolism via transcriptional activation of genes promoting triglyceride synthesis (DGAT2) and metabolic efficiency (COQ10B). The sequence is that of Basic helix-loop-helix ARNT-like protein 1 (Bmal1) from Nannospalax galili (Northern Israeli blind subterranean mole rat).